We begin with the raw amino-acid sequence, 297 residues long: MEDIANPERTKKILKRYGFKFKKSLGQNFLTNITILKQIVEAGEITKDDDVIEIGPGIGSLTEQIARKAHQVLSFEIDDRLIPVLKDTLNHYHNVTVLNQDILEADLPTLIAKHFDGQHNLKIVANLPYYITTPIMLHLLEAGLPIDRMVLMMQKEVAERIDAAPGSKAYGSLSIAVQLHSEVKLAFIVPKTAFVPQPNVDSAIVEFVGRQEPLVTVQNQQLFDQLVRGAFAQRRKTLWNNLQNQFGKQEEVKAGLVAALDQADIAPSTRAEQLSIQQFAQLSDCLNEQPVFAKKRG.

The S-adenosyl-L-methionine site is built by Asn28, Leu30, Gly55, Glu76, Asp101, and Asn126.

The protein belongs to the class I-like SAM-binding methyltransferase superfamily. rRNA adenine N(6)-methyltransferase family. RsmA subfamily.

The protein localises to the cytoplasm. The catalysed reaction is adenosine(1518)/adenosine(1519) in 16S rRNA + 4 S-adenosyl-L-methionine = N(6)-dimethyladenosine(1518)/N(6)-dimethyladenosine(1519) in 16S rRNA + 4 S-adenosyl-L-homocysteine + 4 H(+). Specifically dimethylates two adjacent adenosines (A1518 and A1519) in the loop of a conserved hairpin near the 3'-end of 16S rRNA in the 30S particle. May play a critical role in biogenesis of 30S subunits. This Latilactobacillus sakei subsp. sakei (strain 23K) (Lactobacillus sakei subsp. sakei) protein is Ribosomal RNA small subunit methyltransferase A.